The primary structure comprises 510 residues: Cytochrome P450 90D2 (510 aa).

Residues 6-26 (MVGSGGVYSWPAALLVAAIVV) traverse the membrane as a helical segment. Residue C444 participates in heme binding.

This sequence belongs to the cytochrome P450 family. The cofactor is heme.

It localises to the membrane. The catalysed reaction is 3-epi-6-deoxocathasterone + reduced [NADPH--hemoprotein reductase] + O2 = 6-deoxotyphasterol + oxidized [NADPH--hemoprotein reductase] + H2O + H(+). It carries out the reaction (22S,24R)-22-hydroxy-5alpha-ergostan-3-one + reduced [NADPH--hemoprotein reductase] + O2 = 3-dehydro-6-deoxoteasterone + oxidized [NADPH--hemoprotein reductase] + H2O + H(+). The enzyme catalyses 6-deoxycathasterone + reduced [NADPH--hemoprotein reductase] + O2 = 6-deoxoteasterone + oxidized [NADPH--hemoprotein reductase] + H2O + H(+). The protein operates within plant hormone biosynthesis; brassinosteroid biosynthesis. Involved in reduction steps of the biosynthesis of plant campesterol-derivative steroids, ending to castasterone (CS) but missing brassinolide (BL). Catalyzes the conversion of (22S,24R)-22-hydroxy-5alpha-ergostan-3-one (22-hydroxy-campesta-3-one, 22-OH-3-one) to 3-dehydro-6-deoxoteasterone (6-deoxo3DT, 6-deoxo-3-DHT), 3-epi-6-deoxocathasterone (3-epi-6-deoxoCT) to 6-deoxotyphasterol (6-deoxoTY) and of 6-deoxocathasterone (6-deoxoCT) to 6-deoxoteasterone (6-deoxoTE). The polypeptide is Cytochrome P450 90D2 (Brachypodium distachyon (Purple false brome)).